The sequence spans 1704 residues: Arf-GAP with Rho-GAP domain, ANK repeat and PH domain-containing protein 2 (1704 aa).

Residues 6-70 (EVNVDIKDFL…LKQLQIILSK (65 aa)) enclose the SAM domain. Tyrosine 77 bears the Phosphotyrosine mark. The segment at 126-161 (NLEDSDASVERSQYPQSDDKLSPPKRDFPTAEEPHL) is disordered. Positions 142 to 160 (SDDKLSPPKRDFPTAEEPH) are enriched in basic and acidic residues. PH domains follow at residues 482-574 (KKVK…NALK) and 587-679 (TPEK…QSIA). In terms of domain architecture, Arf-GAP spans 676-811 (QSIAETLSDY…TLLASLTKEE (136 aa)). The C4-type zinc-finger motif lies at 700 to 723 (CADCKAPDPDWASINLCVVICKKC). PH domains are found at residues 878–1003 (DIHS…KHFV) and 1014–1114 (DYDL…AGTD). Residues 1116-1297 (NALQDQQLSK…DLINNYVEIF (182 aa)) enclose the Rho-GAP domain. Residues 1326–1420 (GDLLIEVYVE…AYLVVKRFLT (95 aa)) enclose the Ras-associating domain. Residues 1434 to 1537 (GSIKEGILKI…WMTSIFIAQH (104 aa)) form the PH 5 domain. Serine 1632 bears the Phosphoserine mark. The interval 1636 to 1675 (LEDTEPEAPLGQPKGHKGLKTLRKTEDRNSKATLDSDHKL) is disordered. Basic and acidic residues predominate over residues 1658-1675 (RKTEDRNSKATLDSDHKL).

As to expression, detected in brain, thymus, lymph node, thyroid, spinal cord, trachea, heart, skeletal muscle, spleen, kidney, liver, placenta, lung and peripheral blood leukocytes.

Its subcellular location is the cytoplasm. Its function is as follows. Phosphatidylinositol 3,4,5-trisphosphate-dependent GTPase-activating protein that modulates actin cytoskeleton remodeling by regulating ARF and RHO family members. Is activated by phosphatidylinositol 3,4,5-trisphosphate (PtdIns(3,4,5)P3) binding. Can be activated by phosphatidylinositol 3,4-bisphosphate (PtdIns(3,4,5)P2) binding, albeit with lower efficiency. The chain is Arf-GAP with Rho-GAP domain, ANK repeat and PH domain-containing protein 2 (ARAP2) from Homo sapiens (Human).